The sequence spans 127 residues: uncharacterized protein (127 aa).

Transmembrane regions (helical) follow at residues 20–42 (NMIW…FMSS), 54–76 (IYFC…IFVY), and 91–110 (WILI…ASFT).

It localises to the membrane. The protein resides in the cytoplasm. This is an uncharacterized protein from Schizosaccharomyces pombe (strain 972 / ATCC 24843) (Fission yeast).